A 516-amino-acid polypeptide reads, in one-letter code: Solute carrier family 49 member A3 (516 aa).

Residues 1 to 10 are compositionally biased toward basic and acidic residues; sequence MAGTMDRLED. The interval 1–22 is disordered; sequence MAGTMDRLEDCNSPETSGTAGD. 12 consecutive transmembrane segments (helical) span residues 34–54, 74–94, 104–124, 139–159, 170–190, 199–219, 253–273, 289–309, 321–341, 344–364, 382–402, and 425–445; these read WVFLLVVSLLSCSNAMLWLSF, WLSLIYFVLSIPFGMAAIWVL, ILGAWLNFSGSVLRAVPCLPV, LCALAQTLVVSSPAKLAALWF, ISTMSNPLGLLIANVLSPALV, MLGIYIGPAALACLLATVCLW, VLLAVCFGGGIGVFSSFSALL, LCGALFIVFGILGALLLGLYV, IGLCLTSMTSVAFALVSQLQG, LALAAICSLFGLFGFSVAPVV, GLIFVLGQAEGMLIMLLLTAL, and VSLLLLAGLCTLFTCVLVIFF. Residues 453 to 516 form a disordered region; it reads EAESGGSSSP…EWAETMPRDV (64 aa). Residues 504–516 are compositionally biased toward basic and acidic residues; the sequence is GHSEWAETMPRDV.

The protein belongs to the major facilitator superfamily.

It localises to the membrane. This chain is Solute carrier family 49 member A3 (Slc49a3), found in Mus musculus (Mouse).